Reading from the N-terminus, the 352-residue chain is Methylthioribose-1-phosphate isomerase (352 aa).

Substrate-binding positions include 55 to 57, Arg-98, and Gln-201; that span reads RGA. The Proton donor role is filled by Asp-242. Residue 252 to 253 coordinates substrate; it reads NK.

The protein belongs to the eIF-2B alpha/beta/delta subunits family. MtnA subfamily.

The catalysed reaction is 5-(methylsulfanyl)-alpha-D-ribose 1-phosphate = 5-(methylsulfanyl)-D-ribulose 1-phosphate. It functions in the pathway amino-acid biosynthesis; L-methionine biosynthesis via salvage pathway; L-methionine from S-methyl-5-thio-alpha-D-ribose 1-phosphate: step 1/6. Its function is as follows. Catalyzes the interconversion of methylthioribose-1-phosphate (MTR-1-P) into methylthioribulose-1-phosphate (MTRu-1-P). This Methylococcus capsulatus (strain ATCC 33009 / NCIMB 11132 / Bath) protein is Methylthioribose-1-phosphate isomerase.